A 103-amino-acid chain; its full sequence is Large ribosomal subunit protein bL21 (103 aa).

It belongs to the bacterial ribosomal protein bL21 family. Part of the 50S ribosomal subunit. Contacts protein L20.

This protein binds to 23S rRNA in the presence of protein L20. The polypeptide is Large ribosomal subunit protein bL21 (Maridesulfovibrio salexigens (strain ATCC 14822 / DSM 2638 / NCIMB 8403 / VKM B-1763) (Desulfovibrio salexigens)).